We begin with the raw amino-acid sequence, 233 residues long: Ion-translocating oxidoreductase complex subunit E (233 aa).

Helical transmembrane passes span 18–38 (ALVQ…ATNA), 39–59 (LGLG…VSAL), 69–89 (IPIY…LINA), 92–112 (FGLY…CIVI), 128–148 (ALDG…LGAL), and 182–202 (PFLL…LLAG).

Belongs to the NqrDE/RnfAE family. The complex is composed of six subunits: RnfA, RnfB, RnfC, RnfD, RnfE and RnfG.

It is found in the cell inner membrane. Its function is as follows. Part of a membrane-bound complex that couples electron transfer with translocation of ions across the membrane. The polypeptide is Ion-translocating oxidoreductase complex subunit E (Yersinia pseudotuberculosis serotype O:3 (strain YPIII)).